Consider the following 931-residue polypeptide: Valine--tRNA ligase (931 aa).

A 'HIGH' region motif is present at residues 42–52 (PNVTGSLHMGH). Positions 523–527 (KMSKS) match the 'KMSKS' region motif. ATP is bound at residue Lys-526. Residues 859–931 (MAGLIDKEAE…EEQLEKIKYL (73 aa)) are a coiled coil.

Belongs to the class-I aminoacyl-tRNA synthetase family. ValS type 1 subfamily. Monomer.

It localises to the cytoplasm. It carries out the reaction tRNA(Val) + L-valine + ATP = L-valyl-tRNA(Val) + AMP + diphosphate. Catalyzes the attachment of valine to tRNA(Val). As ValRS can inadvertently accommodate and process structurally similar amino acids such as threonine, to avoid such errors, it has a 'posttransfer' editing activity that hydrolyzes mischarged Thr-tRNA(Val) in a tRNA-dependent manner. This chain is Valine--tRNA ligase, found in Alcanivorax borkumensis (strain ATCC 700651 / DSM 11573 / NCIMB 13689 / SK2).